Reading from the N-terminus, the 186-residue chain is Ribosome-recycling factor (186 aa).

Belongs to the RRF family.

It is found in the cytoplasm. Functionally, responsible for the release of ribosomes from messenger RNA at the termination of protein biosynthesis. May increase the efficiency of translation by recycling ribosomes from one round of translation to another. The polypeptide is Ribosome-recycling factor (Rickettsia typhi (strain ATCC VR-144 / Wilmington)).